A 447-amino-acid chain; its full sequence is Growth/differentiation factor 7 (447 aa).

The first 19 residues, 1–19 (MDLSAAAALCLWLLSACRP), serve as a signal peptide directing secretion. Residues 20-318 (RDGLEAAAVL…AVTAGRRRRR (299 aa)) constitute a propeptide that is removed on maturation. N-linked (GlcNAc...) asparagine glycosylation is present at Asn80. The tract at residues 292–346 (LAAQPPPDPGTGTGSPRAVTAGRRRRRTALAGTRTAQGSGGGAGRGHGRRGRSRC) is disordered. The span at 337-346 (GHGRRGRSRC) shows a compositional bias: basic residues. Disulfide bonds link Cys346–Cys412, Cys375–Cys444, and Cys379–Cys446.

Belongs to the TGF-beta family. Homodimer; disulfide-linked. As to expression, highly expressed in the primary aera of brain neocortex.

It is found in the secreted. Its function is as follows. May play an active role in the motor area of the primate neocortex. This chain is Growth/differentiation factor 7 (GDF7), found in Chlorocebus aethiops (Green monkey).